Here is a 174-residue protein sequence, read N- to C-terminus: Shikimate kinase 2 (174 aa).

An ATP-binding site is contributed by 12-17 (GAGKTT). Residues T16 and D32 each coordinate Mg(2+). Substrate-binding residues include D34, R58, and G79. The tract at residues 112–126 (MQQPESTQRPSLTGK) is LID domain. Residue R120 coordinates ATP. Substrate is bound at residue R139.

It belongs to the shikimate kinase family. AroL subfamily. In terms of assembly, monomer. The cofactor is Mg(2+).

It is found in the cytoplasm. It catalyses the reaction shikimate + ATP = 3-phosphoshikimate + ADP + H(+). It functions in the pathway metabolic intermediate biosynthesis; chorismate biosynthesis; chorismate from D-erythrose 4-phosphate and phosphoenolpyruvate: step 5/7. Its function is as follows. Catalyzes the specific phosphorylation of the 3-hydroxyl group of shikimic acid using ATP as a cosubstrate. The protein is Shikimate kinase 2 of Photorhabdus laumondii subsp. laumondii (strain DSM 15139 / CIP 105565 / TT01) (Photorhabdus luminescens subsp. laumondii).